Here is a 65-residue protein sequence, read N- to C-terminus: Large ribosomal subunit protein uL29 (65 aa).

This sequence belongs to the universal ribosomal protein uL29 family.

This is Large ribosomal subunit protein uL29 from Psychrobacter arcticus (strain DSM 17307 / VKM B-2377 / 273-4).